The primary structure comprises 256 residues: ATP synthase peripheral stalk subunit b, mitochondrial (256 aa).

The N-terminal 42 residues, 1 to 42, are a transit peptide targeting the mitochondrion; that stretch reads MLSRVVLSAAATAAPCLKNAAALGPGVLQATRAFHTGQPRLA. The residue at position 131 (Lys-131) is an N6-succinyllysine. 7 positions are modified to N6-acetyllysine: Lys-139, Lys-154, Lys-162, Lys-221, Lys-225, Lys-233, and Lys-244.

The protein belongs to the eukaryotic ATPase B chain family. As to quaternary structure, component of the ATP synthase complex composed at least of ATP5F1A/subunit alpha, ATP5F1B/subunit beta, ATP5MC1/subunit c (homooctomer), MT-ATP6/subunit a, MT-ATP8/subunit 8, ATP5ME/subunit e, ATP5MF/subunit f, ATP5MG/subunit g, ATP5MK/subunit k, ATP5MJ/subunit j, ATP5F1C/subunit gamma, ATP5F1D/subunit delta, ATP5F1E/subunit epsilon, ATP5PF/subunit F6, ATP5PB/subunit b, ATP5PD/subunit d, ATP5PO/subunit OSCP. ATP synthase complex consists of a soluble F(1) head domain (subunits alpha(3) and beta(3)) - the catalytic core - and a membrane F(0) domain - the membrane proton channel (subunits c, a, 8, e, f, g, k and j). These two domains are linked by a central stalk (subunits gamma, delta, and epsilon) rotating inside the F1 region and a stationary peripheral stalk (subunits F6, b, d, and OSCP).

It is found in the mitochondrion. It localises to the mitochondrion inner membrane. Subunit b, of the mitochondrial membrane ATP synthase complex (F(1)F(0) ATP synthase or Complex V) that produces ATP from ADP in the presence of a proton gradient across the membrane which is generated by electron transport complexes of the respiratory chain. ATP synthase complex consist of a soluble F(1) head domain - the catalytic core - and a membrane F(1) domain - the membrane proton channel. These two domains are linked by a central stalk rotating inside the F(1) region and a stationary peripheral stalk. During catalysis, ATP synthesis in the catalytic domain of F(1) is coupled via a rotary mechanism of the central stalk subunits to proton translocation. In vivo, can only synthesize ATP although its ATP hydrolase activity can be activated artificially in vitro. Part of the complex F(0) domain. Part of the complex F(0) domain and the peripheric stalk, which acts as a stator to hold the catalytic alpha(3)beta(3) subcomplex and subunit a/ATP6 static relative to the rotary elements. The protein is ATP synthase peripheral stalk subunit b, mitochondrial of Mus musculus (Mouse).